The primary structure comprises 196 residues: Probable malonic semialdehyde reductase RutE (196 aa).

The protein belongs to the nitroreductase family. HadB/RutE subfamily. The cofactor is FMN.

It catalyses the reaction 3-hydroxypropanoate + NADP(+) = 3-oxopropanoate + NADPH + H(+). Functionally, may reduce toxic product malonic semialdehyde to 3-hydroxypropionic acid, which is excreted. The sequence is that of Probable malonic semialdehyde reductase RutE from Escherichia coli (strain K12 / MC4100 / BW2952).